The following is a 201-amino-acid chain: MSRYLGPRFKIIRRLKTLPGLTSKRPKYKKRVRRRFSRPWWKKSQHLICLQEKQKIRFHYGLTERQLRQYINIAKRAQGSTGQVLLQLLEMRLDNIIFQLGIARTIPAARQIVNHRHVLVNGRVVDIPSYRCKPQDVLTIKTKNPEELRTIINKNRSKFRRKVPYHLTLDLAQNKGIVNKIIDRKDIQLKIQEMLVIEYYC.

The region spanning 91–151 (MRLDNIIFQL…TKNPEELRTI (61 aa)) is the S4 RNA-binding domain.

This sequence belongs to the universal ribosomal protein uS4 family. As to quaternary structure, part of the 30S ribosomal subunit. Contacts protein S5. The interaction surface between S4 and S5 is involved in control of translational fidelity.

It is found in the plastid. It localises to the chloroplast. In terms of biological role, one of the primary rRNA binding proteins, it binds directly to 16S rRNA where it nucleates assembly of the body of the 30S subunit. Functionally, with S5 and S12 plays an important role in translational accuracy. The sequence is that of Small ribosomal subunit protein uS4c (rps4) from Welwitschia mirabilis (Tree tumbo).